We begin with the raw amino-acid sequence, 150 residues long: Large ribosomal subunit protein uL13 (150 aa).

The interval 129 to 150 is disordered; that stretch reads AEHPHAAQQPKPLQLDPAATAQ.

Belongs to the universal ribosomal protein uL13 family. In terms of assembly, part of the 50S ribosomal subunit.

This protein is one of the early assembly proteins of the 50S ribosomal subunit, although it is not seen to bind rRNA by itself. It is important during the early stages of 50S assembly. This Synechococcus sp. (strain WH7803) protein is Large ribosomal subunit protein uL13.